The chain runs to 70 residues: Beta sliding clamp (70 aa).

Belongs to the beta sliding clamp family. Forms a ring-shaped head-to-tail homodimer around DNA which binds and tethers DNA polymerases and other proteins to the DNA. The DNA replisome complex has a single clamp-loading complex (3 tau and 1 each of delta, delta', psi and chi subunits) which binds 3 Pol III cores (1 core on the leading strand and 2 on the lagging strand) each with a beta sliding clamp dimer. Additional proteins in the replisome are other copies of gamma, psi and chi, Ssb, DNA helicase and RNA primase.

The protein localises to the cytoplasm. Confers DNA tethering and processivity to DNA polymerases and other proteins. Acts as a clamp, forming a ring around DNA (a reaction catalyzed by the clamp-loading complex) which diffuses in an ATP-independent manner freely and bidirectionally along dsDNA. Initially characterized for its ability to contact the catalytic subunit of DNA polymerase III (Pol III), a complex, multichain enzyme responsible for most of the replicative synthesis in bacteria; Pol III exhibits 3'-5' exonuclease proofreading activity. The beta chain is required for initiation of replication as well as for processivity of DNA replication. This Rhodobacter capsulatus (Rhodopseudomonas capsulata) protein is Beta sliding clamp (dnaN).